The following is a 445-amino-acid chain: Tubby-like F-box protein 14 (445 aa).

The F-box domain occupies 56 to 114 (SSCWANLPPELLRDVIERLEASEAAWPSRKNVVACAAVCRTWRDMCREIVKNPEFCGKI).

Belongs to the TUB family. As to expression, ubiquitous.

The chain is Tubby-like F-box protein 14 (TULP14) from Oryza sativa subsp. japonica (Rice).